Reading from the N-terminus, the 278-residue chain is Ribosomal RNA small subunit methyltransferase A (278 aa).

Asn18, Leu20, Gly45, Glu66, Asp89, and Asn110 together coordinate S-adenosyl-L-methionine.

It belongs to the class I-like SAM-binding methyltransferase superfamily. rRNA adenine N(6)-methyltransferase family. RsmA subfamily.

The protein localises to the cytoplasm. It catalyses the reaction adenosine(1518)/adenosine(1519) in 16S rRNA + 4 S-adenosyl-L-methionine = N(6)-dimethyladenosine(1518)/N(6)-dimethyladenosine(1519) in 16S rRNA + 4 S-adenosyl-L-homocysteine + 4 H(+). In terms of biological role, specifically dimethylates two adjacent adenosines (A1518 and A1519) in the loop of a conserved hairpin near the 3'-end of 16S rRNA in the 30S particle. May play a critical role in biogenesis of 30S subunits. The polypeptide is Ribosomal RNA small subunit methyltransferase A (Cupriavidus pinatubonensis (strain JMP 134 / LMG 1197) (Cupriavidus necator (strain JMP 134))).